Consider the following 438-residue polypeptide: Tyrosine--tRNA ligase (438 aa).

Tyrosine 47 is an L-tyrosine binding site. The 'HIGH' region motif lies at 52-61 (PTATSLHVGG). Residues tyrosine 183 and glutamine 187 each contribute to the L-tyrosine site. The 'KMSKS' region signature appears at 243 to 247 (KMGKT). Lysine 246 serves as a coordination point for ATP. One can recognise an S4 RNA-binding domain in the interval 370-436 (LWIVEALQTA…GKRKYALLKI (67 aa)).

The protein belongs to the class-I aminoacyl-tRNA synthetase family. TyrS type 1 subfamily. Homodimer.

It localises to the cytoplasm. The enzyme catalyses tRNA(Tyr) + L-tyrosine + ATP = L-tyrosyl-tRNA(Tyr) + AMP + diphosphate + H(+). In terms of biological role, catalyzes the attachment of tyrosine to tRNA(Tyr) in a two-step reaction: tyrosine is first activated by ATP to form Tyr-AMP and then transferred to the acceptor end of tRNA(Tyr). The sequence is that of Tyrosine--tRNA ligase from Rhodopirellula baltica (strain DSM 10527 / NCIMB 13988 / SH1).